Consider the following 488-residue polypeptide: MSLRIKQEALTFDDVLLVPAHSTVLPNTANLSTQLTKEIRLNIPMLSAAMDTVTETKLAISLAQEGGIGFIHKNMTIERQADRVRKVKKFESGIVSEPVTVLPNLTLAELAEMVKKNGFAGYPVVDGENNLIGIITGRDTRFVKDLSKTVSQVMTKKEDLVTVKEGASREEILELMHQHRVEKVLVVNDSFKLKGMITVKDFQKAEQKPNACKDEFGRLRVGAAVGAGAGNEERIDALVKAGVDVLLIDSSHGHSEGVLQRVRETRAKYPNLPIVAGNVATAEGAIALADAGASAVKVGIGPGSICTTRIVTGVGVPQITAIADAAAALKDRGIPVIADGGIRFSGDIAKAIAAGASCVMVGSMFAGTEEAPGEIELYQGRAFKSYRGMGSLGAMAKGSSDRYFQSDNAADKLVPEGIEGRIPYKGYLKEIIHQQMGGLRSCMGLTGCATIDELRTKAEFVRISGAGIKESHVHDVAITKEAPNYRMG.

CBS domains lie at 94-150 and 154-215; these read IVSE…SKTV and MTKK…CKDE. NAD(+) is bound by residues Asp249, 249–251, and 299–301; these read DSS and GIG. Residues Gly301 and Gly303 each contribute to the K(+) site. IMP is bound at residue Ser304. K(+) is bound at residue Cys306. The Thioimidate intermediate role is filled by Cys306. IMP-binding positions include 339-341, 362-363, and 386-390; these read DGG, GS, and YRGMG. Arg402 serves as the catalytic Proton acceptor. Residue Glu416 coordinates IMP. 3 residues coordinate K(+): Glu470, Ser471, and His472.

The protein belongs to the IMPDH/GMPR family. Homotetramer. K(+) is required as a cofactor.

It catalyses the reaction IMP + NAD(+) + H2O = XMP + NADH + H(+). It functions in the pathway purine metabolism; XMP biosynthesis via de novo pathway; XMP from IMP: step 1/1. With respect to regulation, mycophenolic acid (MPA) is a non-competitive inhibitor that prevents formation of the closed enzyme conformation by binding to the same site as the amobile flap. In contrast, mizoribine monophosphate (MZP) is a competitive inhibitor that induces the closed conformation. MPA is a potent inhibitor of mammalian IMPDHs but a poor inhibitor of the bacterial enzymes. MZP is a more potent inhibitor of bacterial IMPDH. Functionally, catalyzes the conversion of inosine 5'-phosphate (IMP) to xanthosine 5'-phosphate (XMP), the first committed and rate-limiting step in the de novo synthesis of guanine nucleotides, and therefore plays an important role in the regulation of cell growth. The protein is Inosine-5'-monophosphate dehydrogenase of Haemophilus influenzae (strain ATCC 51907 / DSM 11121 / KW20 / Rd).